The primary structure comprises 119 residues: Holo-[acyl-carrier-protein] synthase (119 aa).

Positions 2 and 51 each coordinate Mg(2+).

This sequence belongs to the P-Pant transferase superfamily. AcpS family. Mg(2+) is required as a cofactor.

It is found in the cytoplasm. The catalysed reaction is apo-[ACP] + CoA = holo-[ACP] + adenosine 3',5'-bisphosphate + H(+). Transfers the 4'-phosphopantetheine moiety from coenzyme A to a Ser of acyl-carrier-protein. This Chlorobium luteolum (strain DSM 273 / BCRC 81028 / 2530) (Pelodictyon luteolum) protein is Holo-[acyl-carrier-protein] synthase.